A 1392-amino-acid polypeptide reads, in one-letter code: DNA-directed RNA polymerase subunit beta (1392 aa).

This sequence belongs to the RNA polymerase beta chain family. As to quaternary structure, the RNAP catalytic core consists of 2 alpha, 1 beta, 1 beta' and 1 omega subunit. When a sigma factor is associated with the core the holoenzyme is formed, which can initiate transcription.

It catalyses the reaction RNA(n) + a ribonucleoside 5'-triphosphate = RNA(n+1) + diphosphate. Its function is as follows. DNA-dependent RNA polymerase catalyzes the transcription of DNA into RNA using the four ribonucleoside triphosphates as substrates. The chain is DNA-directed RNA polymerase subunit beta from Neisseria gonorrhoeae (strain ATCC 700825 / FA 1090).